Reading from the N-terminus, the 517-residue chain is Mitochondrial division protein fszA (517 aa).

Residues Gly-60–Asn-64, Gly-147–Gly-149, Glu-178, Arg-182, and Asp-225 each bind GTP. The disordered stretch occupies residues Phe-496–Glu-517. Over residues Thr-497–Glu-517 the composition is skewed to low complexity.

It belongs to the FtsZ family.

The protein resides in the mitochondrion matrix. In terms of biological role, probably involved in mitochondrion division process. When overexpressed, induces mitochondrial tubule formation. Binds to and hydrolyzes GTP. The sequence is that of Mitochondrial division protein fszA (fszA) from Dictyostelium discoideum (Social amoeba).